We begin with the raw amino-acid sequence, 148 residues long: 3-dehydroquinate dehydratase (148 aa).

Residue Tyr-24 is the Proton acceptor of the active site. Residues Asn-80, His-86, and Asp-93 each contribute to the substrate site. His-106 serves as the catalytic Proton donor. Residues 107 to 108 and Arg-117 each bind substrate; that span reads IS.

It belongs to the type-II 3-dehydroquinase family. As to quaternary structure, homododecamer.

It catalyses the reaction 3-dehydroquinate = 3-dehydroshikimate + H2O. Its pathway is metabolic intermediate biosynthesis; chorismate biosynthesis; chorismate from D-erythrose 4-phosphate and phosphoenolpyruvate: step 3/7. Functionally, catalyzes a trans-dehydration via an enolate intermediate. This Acidovorax sp. (strain JS42) protein is 3-dehydroquinate dehydratase.